A 177-amino-acid polypeptide reads, in one-letter code: Large ribosomal subunit protein uL6 (177 aa).

Belongs to the universal ribosomal protein uL6 family. In terms of assembly, part of the 50S ribosomal subunit.

In terms of biological role, this protein binds to the 23S rRNA, and is important in its secondary structure. It is located near the subunit interface in the base of the L7/L12 stalk, and near the tRNA binding site of the peptidyltransferase center. This Cupriavidus pinatubonensis (strain JMP 134 / LMG 1197) (Cupriavidus necator (strain JMP 134)) protein is Large ribosomal subunit protein uL6.